A 420-amino-acid chain; its full sequence is Pyrin and HIN domain-containing protein 1 (420 aa).

Residues 1 to 87 (MVNEYKRIVL…ANKLKNEKAK (87 aa)) enclose the Pyrin domain. Disordered stretches follow at residues 82-201 (KNEK…SSSA) and 216-236 (RLKN…GSKK). Positions 87 to 102 (KAKRTRTGKRKTAAKR) are enriched in basic residues. Composition is skewed to polar residues over residues 108-118 (PSTSQPMSTTN) and 126-151 (GRST…AIQI). A compositionally biased stretch (low complexity) spans 152–169 (SPTIASSSGQTSSRSSET). Polar residues predominate over residues 170–201 (LQSIIQSPKTPKRPSSSILDPPVSSGTASSSA). One can recognise an HIN-200 domain in the interval 219–416 (NVPKEPSEEN…STTHSNMQVI (198 aa)). Basic and acidic residues predominate over residues 220-229 (VPKEPSEENG).

This sequence belongs to the HIN-200 family.

It is found in the nucleus. This Mus musculus (Mouse) protein is Pyrin and HIN domain-containing protein 1.